The sequence spans 1047 residues: Probable phospholipid-transporting ATPase IIA (1047 aa).

Position 2 is an N-acetylthreonine (Thr-2). The Cytoplasmic portion of the chain corresponds to 2 to 69 (TDNIPLQPVR…NQKYNFFTFL (68 aa)). The helical transmembrane segment at 70–91 (PGVLFNQFKYFFNLYFLLLACS) threads the bilayer. Residues 92–96 (QFVPE) are Extracellular-facing. A helical membrane pass occupies residues 97 to 119 (MRLGALYTYWVPLGFVLAVTVIR). The Cytoplasmic segment spans residues 120–303 (EAVEEIRCYV…GLFDLEVNCL (184 aa)). Residues 304 to 325 (TKILFGALVVVSLVMVALQHFA) traverse the membrane as a helical segment. Residues 326 to 332 (GRWYLQI) lie on the Extracellular side of the membrane. A helical membrane pass occupies residues 333 to 354 (IRFLLLFSNIIPISLRVNLDMG). Residues 355–841 (KIVYSWVIRR…GRNSYKRSAA (487 aa)) lie on the Cytoplasmic side of the membrane. The 4-aspartylphosphate intermediate role is filled by Asp-391. ATP contacts are provided by Asp-391, Lys-392, Thr-393, Glu-502, Phe-544, Lys-549, Lys-568, Arg-597, Thr-677, Gly-678, Asp-679, Arg-759, and Lys-765. Asp-391 contributes to the Mg(2+) binding site. A Mg(2+)-binding site is contributed by Thr-393. Asp-785 contributes to the Mg(2+) binding site. ATP-binding residues include Asn-788 and Asp-789. Residue Asp-789 coordinates Mg(2+). The helical transmembrane segment at 842–862 (LSQFVIHRSLCISTMQAVFSS) threads the bilayer. Topologically, residues 863 to 874 (VFYFASVPLYQG) are extracellular. Residues 875-893 (FLIIGYSTIYTMFPVFSLV) form a helical membrane-spanning segment. The Cytoplasmic portion of the chain corresponds to 894–923 (LDKDVKSEVAMLYPELYKDLLKGRPLSYKT). The chain crosses the membrane as a helical span at residues 924–942 (FLIWVLISIYQGSTIMYGA). Topologically, residues 943–949 (LLLFESE) are extracellular. Residues 950–972 (FVHIVAISFTSLILTELLMVALT) form a helical membrane-spanning segment. At 973–978 (IQTWHW) the chain is on the cytoplasmic side. A helical transmembrane segment spans residues 979 to 999 (LMTVAELLSLACYIASLVFLH). Over 1000-1006 (EFIDVYF) the chain is Extracellular. A helical transmembrane segment spans residues 1007–1030 (IATLSFLWKVSVITLVSCLPLYVL). Topologically, residues 1031 to 1047 (KYLRRRFSPPSYSKLTS) are cytoplasmic.

It belongs to the cation transport ATPase (P-type) (TC 3.A.3) family. Type IV subfamily. As to quaternary structure, heterotrimer with MON2 and DOP1B; this complex regulates SNX3-retromer mediated endosomal sorting of WLS. Interacts with RAB5A and RAB11A. Mg(2+) serves as cofactor.

The protein resides in the early endosome membrane. Its subcellular location is the recycling endosome membrane. It localises to the late endosome membrane. The protein localises to the golgi apparatus. It is found in the trans-Golgi network membrane. The protein resides in the cell membrane. It carries out the reaction ATP + H2O + phospholipidSide 1 = ADP + phosphate + phospholipidSide 2.. Plays a role in regulating membrane trafficking of cargo proteins, namely endosome to plasma membrane recycling, probably acting through RAB5 and RAB11 activation. Also involved in endosome to trans-Golgi network retrograde transport. In complex with MON2 and DOP1B, regulates SNX3 retromer-mediated endosomal sorting of WLS, a transporter of Wnt morphogens in developing tissues. Participates in the formation of endosomal carriers that direct WLS trafficking back to Golgi, away from lysosomal degradation. Appears to be implicated in intercellular communication by negatively regulating the release of exosomes. The flippase activity towards membrane lipids and its role in membrane asymmetry remains to be proved. Required for the maintenance of neurite morphology and synaptic transmission. This is Probable phospholipid-transporting ATPase IIA from Homo sapiens (Human).